The chain runs to 341 residues: Anthranilate phosphoribosyltransferase (341 aa).

Residues G80, 83–84, T88, 90–93, 108–116, and S120 each bind 5-phospho-alpha-D-ribose 1-diphosphate; these read GD, NIST, and KHGNRAMSS. An anthranilate-binding site is contributed by G80. Residue S92 participates in Mg(2+) binding. N111 serves as a coordination point for anthranilate. R166 provides a ligand contact to anthranilate. Mg(2+) is bound by residues D225 and E226.

It belongs to the anthranilate phosphoribosyltransferase family. As to quaternary structure, homodimer. Mg(2+) is required as a cofactor.

It catalyses the reaction N-(5-phospho-beta-D-ribosyl)anthranilate + diphosphate = 5-phospho-alpha-D-ribose 1-diphosphate + anthranilate. It functions in the pathway amino-acid biosynthesis; L-tryptophan biosynthesis; L-tryptophan from chorismate: step 2/5. Its function is as follows. Catalyzes the transfer of the phosphoribosyl group of 5-phosphorylribose-1-pyrophosphate (PRPP) to anthranilate to yield N-(5'-phosphoribosyl)-anthranilate (PRA). This Roseiflexus sp. (strain RS-1) protein is Anthranilate phosphoribosyltransferase.